Consider the following 202-residue polypeptide: Securin (202 aa).

Residues 1–92 (MATLIYVDKE…QKQPSFSAKK (92 aa)) are disordered. An N-acetylalanine modification is found at Ala2. A D-box motif is present at residues 61-64 (RKAL). 2 short sequence motifs (TEK-box) span residues 71 to 73 (TEK) and 94 to 96 (TEK). Residues 163–173 (XPSPVKMPSPP) carry the SH3-binding motif. Ser165 carries the phosphoserine; by CDK1 modification.

Belongs to the securin family. Interacts with RPS10 and DNAJA1. Interacts with the caspase-like ESPL1, and prevents its protease activity probably by covering its active site. Interacts with TP53 and blocks its activity probably by blocking its binding to DNA. Interacts with the Ku 70 kDa subunit of ds-DNA kinase. Interacts with PTTG1IP. In terms of processing, phosphorylated at Ser-165 by CDK1 during mitosis. Phosphorylated in vitro by ds-DNA kinase. Post-translationally, ubiquitinated through 'Lys-11' linkage of ubiquitin moieties by the anaphase promoting complex (APC) at the onset of anaphase, conducting to its degradation. 'Lys-11'-linked ubiquitination is mediated by the E2 ligase UBE2C/UBCH10.

The protein resides in the cytoplasm. It localises to the nucleus. In terms of biological role, regulatory protein, which plays a central role in chromosome stability, in the p53/TP53 pathway, and DNA repair. Probably acts by blocking the action of key proteins. During the mitosis, it blocks Separase/ESPL1 function, preventing the proteolysis of the cohesin complex and the subsequent segregation of the chromosomes. At the onset of anaphase, it is ubiquitinated, conducting to its destruction and to the liberation of ESPL1. Its function is however not limited to a blocking activity, since it is required to activate ESPL1. Negatively regulates the transcriptional activity and related apoptosis activity of TP53. The negative regulation of TP53 may explain the strong transforming capability of the protein when it is overexpressed. May also play a role in DNA repair via its interaction with Ku, possibly by connecting DNA damage-response pathways with sister chromatid separation. This Pan troglodytes (Chimpanzee) protein is Securin (PTTG1).